The following is a 272-amino-acid chain: Ribosomal RNA small subunit methyltransferase A (272 aa).

6 residues coordinate S-adenosyl-L-methionine: Asn-18, Leu-20, Gly-45, Glu-66, Asp-91, and Asn-113.

The protein belongs to the class I-like SAM-binding methyltransferase superfamily. rRNA adenine N(6)-methyltransferase family. RsmA subfamily.

The protein localises to the cytoplasm. It carries out the reaction adenosine(1518)/adenosine(1519) in 16S rRNA + 4 S-adenosyl-L-methionine = N(6)-dimethyladenosine(1518)/N(6)-dimethyladenosine(1519) in 16S rRNA + 4 S-adenosyl-L-homocysteine + 4 H(+). In terms of biological role, specifically dimethylates two adjacent adenosines (A1518 and A1519) in the loop of a conserved hairpin near the 3'-end of 16S rRNA in the 30S particle. May play a critical role in biogenesis of 30S subunits. The protein is Ribosomal RNA small subunit methyltransferase A of Photorhabdus laumondii subsp. laumondii (strain DSM 15139 / CIP 105565 / TT01) (Photorhabdus luminescens subsp. laumondii).